Consider the following 198-residue polypeptide: Small ribosomal subunit protein uS2 (198 aa).

Belongs to the universal ribosomal protein uS2 family.

This chain is Small ribosomal subunit protein uS2 (rps2), found in Methanothermobacter thermautotrophicus (strain ATCC 29096 / DSM 1053 / JCM 10044 / NBRC 100330 / Delta H) (Methanobacterium thermoautotrophicum).